A 220-amino-acid chain; its full sequence is Orotate phosphoribosyltransferase (220 aa).

Lys26 contacts 5-phospho-alpha-D-ribose 1-diphosphate. Residue 34 to 35 (FF) participates in orotate binding. 5-phospho-alpha-D-ribose 1-diphosphate-binding positions include 72–73 (YK), Arg99, Lys100, Lys103, His105, and 125–133 (DDVISAGTS). The orotate site is built by Ser129 and Arg157.

This sequence belongs to the purine/pyrimidine phosphoribosyltransferase family. PyrE subfamily. As to quaternary structure, homodimer. Requires Mg(2+) as cofactor.

It carries out the reaction orotidine 5'-phosphate + diphosphate = orotate + 5-phospho-alpha-D-ribose 1-diphosphate. Its pathway is pyrimidine metabolism; UMP biosynthesis via de novo pathway; UMP from orotate: step 1/2. Its function is as follows. Catalyzes the transfer of a ribosyl phosphate group from 5-phosphoribose 1-diphosphate to orotate, leading to the formation of orotidine monophosphate (OMP). This is Orotate phosphoribosyltransferase from Nitrosococcus oceani (strain ATCC 19707 / BCRC 17464 / JCM 30415 / NCIMB 11848 / C-107).